Reading from the N-terminus, the 92-residue chain is Small ribosomal subunit protein uS19 (92 aa).

It belongs to the universal ribosomal protein uS19 family.

Protein S19 forms a complex with S13 that binds strongly to the 16S ribosomal RNA. This Crocosphaera subtropica (strain ATCC 51142 / BH68) (Cyanothece sp. (strain ATCC 51142)) protein is Small ribosomal subunit protein uS19.